The chain runs to 90 residues: MMEAHFKYHGNLTGRAHFPTLATEVDTSSDKYSNLYMYVGLFLSLLAILLILLFTMLLRLKHVISPINSDSTESVPQFTDVEMQSRIPTP.

An N-linked (GlcNAc...) asparagine glycan is attached at N11. A helical transmembrane segment spans residues 38-58 (YVGLFLSLLAILLILLFTMLL). The segment at 69 to 90 (SDSTESVPQFTDVEMQSRIPTP) is disordered.

The protein localises to the membrane. This is Serine-rich and transmembrane domain-containing 2 from Homo sapiens (Human).